A 146-amino-acid polypeptide reads, in one-letter code: Hemoglobin subunit beta (146 aa).

Position 1 is an N-acetylvaline (Val1). Positions 2-146 (DLTAEEKAAV…VANALAHKYH (145 aa)) constitute a Globin domain. A Phosphoserine modification is found at Ser44. An N6-acetyllysine modification is found at Lys59. Residue His63 coordinates heme b. At Lys82 the chain carries N6-acetyllysine. His92 lines the heme b pocket. Cys93 carries the post-translational modification S-nitrosocysteine. Lys144 carries the N6-acetyllysine modification.

It belongs to the globin family. Heterotetramer of two alpha chains and two beta chains. In terms of tissue distribution, red blood cells.

Functionally, involved in oxygen transport from the lung to the various peripheral tissues. The chain is Hemoglobin subunit beta (HBB) from Rhinoceros unicornis (Greater Indian rhinoceros).